A 621-amino-acid chain; its full sequence is Chaperone protein HscA homolog (621 aa).

The protein belongs to the heat shock protein 70 family.

In terms of biological role, chaperone involved in the maturation of iron-sulfur cluster-containing proteins. Has a low intrinsic ATPase activity which is markedly stimulated by HscB. The protein is Chaperone protein HscA homolog of Ralstonia pickettii (strain 12J).